The sequence spans 368 residues: Tubby-like F-box protein 2 (368 aa).

Residues 1–17 (MVPWRRSSSSSSAPSSR) are compositionally biased toward low complexity. The disordered stretch occupies residues 1–44 (MVPWRRSSSSSSAPSSRPARRPARTNARVSPDVSSELSPLAGEE). The 56-residue stretch at 49-104 (ERWSALVPDLLADILRCVEAGSERWPPRRDVVACASVCRRWRDVAVAVVQPPLESG) folds into the F-box domain.

Belongs to the TUB family. Expressed in stems, leaves, flowers and seeds.

This is Tubby-like F-box protein 2 (TULP2) from Oryza sativa subsp. japonica (Rice).